We begin with the raw amino-acid sequence, 161 residues long: Nucleotide-binding protein Bphy_0527 (161 aa).

The protein belongs to the YajQ family.

Its function is as follows. Nucleotide-binding protein. This Paraburkholderia phymatum (strain DSM 17167 / CIP 108236 / LMG 21445 / STM815) (Burkholderia phymatum) protein is Nucleotide-binding protein Bphy_0527.